Here is a 199-residue protein sequence, read N- to C-terminus: Dephospho-CoA kinase (199 aa).

The DPCK domain occupies 3-199; sequence ILGLTGSIGM…ATAKMPQRRA (197 aa). 11 to 16 is an ATP binding site; that stretch reads GMGKST.

This sequence belongs to the CoaE family.

The protein localises to the cytoplasm. The catalysed reaction is 3'-dephospho-CoA + ATP = ADP + CoA + H(+). It functions in the pathway cofactor biosynthesis; coenzyme A biosynthesis; CoA from (R)-pantothenate: step 5/5. Catalyzes the phosphorylation of the 3'-hydroxyl group of dephosphocoenzyme A to form coenzyme A. The chain is Dephospho-CoA kinase from Rhodopseudomonas palustris (strain BisB18).